The sequence spans 72 residues: Translation initiation factor IF-1 (72 aa).

The 72-residue stretch at 1-72 (MAKQDVIELE…TRGRITYRYK (72 aa)) folds into the S1-like domain.

This sequence belongs to the IF-1 family. As to quaternary structure, component of the 30S ribosomal translation pre-initiation complex which assembles on the 30S ribosome in the order IF-2 and IF-3, IF-1 and N-formylmethionyl-tRNA(fMet); mRNA recruitment can occur at any time during PIC assembly.

It localises to the cytoplasm. One of the essential components for the initiation of protein synthesis. Stabilizes the binding of IF-2 and IF-3 on the 30S subunit to which N-formylmethionyl-tRNA(fMet) subsequently binds. Helps modulate mRNA selection, yielding the 30S pre-initiation complex (PIC). Upon addition of the 50S ribosomal subunit IF-1, IF-2 and IF-3 are released leaving the mature 70S translation initiation complex. The chain is Translation initiation factor IF-1 from Staphylococcus aureus (strain USA300 / TCH1516).